The sequence spans 364 residues: Chorismate synthase (364 aa).

Arginine 48 provides a ligand contact to NADP(+). FMN contacts are provided by residues 131 to 133 (RAS), 243 to 244 (NA), glycine 288, 303 to 307 (KPTSS), and arginine 329.

It belongs to the chorismate synthase family. In terms of assembly, homotetramer. Requires FMNH2 as cofactor.

It carries out the reaction 5-O-(1-carboxyvinyl)-3-phosphoshikimate = chorismate + phosphate. It functions in the pathway metabolic intermediate biosynthesis; chorismate biosynthesis; chorismate from D-erythrose 4-phosphate and phosphoenolpyruvate: step 7/7. Functionally, catalyzes the anti-1,4-elimination of the C-3 phosphate and the C-6 proR hydrogen from 5-enolpyruvylshikimate-3-phosphate (EPSP) to yield chorismate, which is the branch point compound that serves as the starting substrate for the three terminal pathways of aromatic amino acid biosynthesis. This reaction introduces a second double bond into the aromatic ring system. The polypeptide is Chorismate synthase (Bartonella bacilliformis (strain ATCC 35685 / KC583 / Herrer 020/F12,63)).